The chain runs to 395 residues: MSANATLKPLCPILEQMSRLQSHSNTSIRYIDHAAVLLHGLASLLGLVENGVILFVVGCRMRQTVVTTWVLHLALSDLLASASLPFFTYFLAVGHSWELGTTFCKLHSSIFFLNMFASGFLLSAISLDRCLQVVRPVWAQNHRTVAAAHKVCLVLWALAVLNTVPYFVFRDTISRLDGRIMCYYNVLLLNPGPDRDATCNSRQVALAVSKFLLAFLVPLAIIASSHAAVSLRLQHRGRRRPGRFVRLVAAVVAAFALCWGPYHVFSLLEARAHANPGLRPLVWRGLPFVTSLAFFNSVANPVLYVLTCPDMLRKLRRSLRTVLESVLVDDSELGGAGSSRRRRTSSTARSASPLALCSRPEEPRGPARLLGWLLGSCAASPQTGPLNRALSSTSS.

The Extracellular segment spans residues 1–33; that stretch reads MSANATLKPLCPILEQMSRLQSHSNTSIRYIDH. Residues N4 and N25 are each glycosylated (N-linked (GlcNAc...) asparagine). The chain crosses the membrane as a helical span at residues 34–56; the sequence is AAVLLHGLASLLGLVENGVILFV. At 57–67 the chain is on the cytoplasmic side; sequence VGCRMRQTVVT. A helical membrane pass occupies residues 68 to 89; it reads TWVLHLALSDLLASASLPFFTY. The Extracellular segment spans residues 90 to 106; that stretch reads FLAVGHSWELGTTFCKL. C104 and C182 are oxidised to a cystine. Residues 107–127 form a helical membrane-spanning segment; that stretch reads HSSIFFLNMFASGFLLSAISL. The Cytoplasmic portion of the chain corresponds to 128–146; it reads DRCLQVVRPVWAQNHRTVA. Residues 147-168 form a helical membrane-spanning segment; that stretch reads AAHKVCLVLWALAVLNTVPYFV. The Extracellular segment spans residues 169–210; that stretch reads FRDTISRLDGRIMCYYNVLLLNPGPDRDATCNSRQVALAVSK. Residues 211–231 traverse the membrane as a helical segment; the sequence is FLLAFLVPLAIIASSHAAVSL. Over 232-247 the chain is Cytoplasmic; it reads RLQHRGRRRPGRFVRL. A helical membrane pass occupies residues 248–269; that stretch reads VAAVVAAFALCWGPYHVFSLLE. At 270-288 the chain is on the extracellular side; it reads ARAHANPGLRPLVWRGLPF. The chain crosses the membrane as a helical span at residues 289-308; it reads VTSLAFFNSVANPVLYVLTC. At 309-395 the chain is on the cytoplasmic side; that stretch reads PDMLRKLRRS…LNRALSSTSS (87 aa). The short motif at 330–333 is the Involved in the recycling of CRTH2 element; it reads DSEL. S331 and S345 each carry phosphoserine. The interval 333 to 363 is disordered; sequence LGGAGSSRRRRTSSTARSASPLALCSRPEEP.

This sequence belongs to the G-protein coupled receptor 1 family. Phosphorylated. As to expression, widespread expression. High expression in stomach, small intestine, heart and thymus. Intermediate expression in colon, spinal cord and peripheral blood and low expression in brain, skeletal muscle and spleen. Expressed also on Th2- and Tc2- type cells, eosinophils and basophils.

It is found in the cell membrane. Functionally, receptor for prostaglandin D2 (PGD2). Coupled to the G(i)-protein. Receptor activation may result in pertussis toxin-sensitive decreases in cAMP levels and Ca(2+) mobilization. PI3K signaling is also implicated in mediating PTGDR2 effects. PGD2 induced receptor internalization. CRTH2 internalization can be regulated by diverse kinases such as, PKC, PKA, GRK2, GPRK5/GRK5 and GRK6. Receptor activation is responsible, at least in part, in immune regulation and allergic/inflammation responses. This chain is Prostaglandin D2 receptor 2 (PTGDR2), found in Homo sapiens (Human).